The primary structure comprises 102 residues: Thioredoxin (102 aa).

Residues 2–102 (LHIDELTFEN…ILIHTINKYL (101 aa)) form the Thioredoxin domain. Catalysis depends on nucleophile residues Cys29 and Cys32. Cys29 and Cys32 are disulfide-bonded.

It belongs to the thioredoxin family.

Its subcellular location is the plastid. It is found in the chloroplast. Functionally, participates in various redox reactions through the reversible oxidation of its active center dithiol to a disulfide and catalyzes dithiol-disulfide exchange reactions. In Cyanidioschyzon merolae (strain NIES-3377 / 10D) (Unicellular red alga), this protein is Thioredoxin (trxA).